The chain runs to 304 residues: Rhomboid-like protein 19 (304 aa).

The next 6 helical transmembrane spans lie at 23-43 (LVVG…LALI), 58-78 (GYFE…LFMG), 93-113 (FIFV…IALY), 120-140 (VYLY…LVGI), 158-175 (WLPS…FFTL), and 179-198 (AYLP…LRYL). The interval 247–304 (SEDHDYSTSGAPLPGSDSAEASRRRERGARALEERLGTERLVPARNKDELQSDGLDNV) is disordered. Positions 266–284 (EASRRRERGARALEERLGT) are enriched in basic and acidic residues.

It belongs to the peptidase S54 family.

The protein resides in the membrane. Its function is as follows. Probable rhomboid-type serine protease that catalyzes intramembrane proteolysis. The sequence is that of Rhomboid-like protein 19 from Arabidopsis thaliana (Mouse-ear cress).